We begin with the raw amino-acid sequence, 551 residues long: Cilia- and flagella-associated protein 45 (551 aa).

Disordered stretches follow at residues 1–30 (MPLS…TKAV) and 461–489 (RLEE…QQKE). The stretch at 157–526 (NNNKKLSDLE…IKRKKLEELR (370 aa)) forms a coiled coil.

Belongs to the CFAP45 family. Microtubule inner protein component of sperm flagellar doublet microtubules. Interacts with AK8; dimerization with AK8 may create a cavity at the interface of the dimer that can accommodate AMP. Interacts with CFAP52. Interacts with ENKUR. Directly interacts with DNALI1. Interacts with DNAH11. Interacts with DNAI1. As to expression, expressed in respiratory cells and in sperm (at protein level). Expressed in nasopharyngeal epithelium and trachea.

The protein localises to the cytoplasm. Its subcellular location is the cytoskeleton. It localises to the cilium axoneme. The protein resides in the flagellum axoneme. It is found in the cell projection. The protein localises to the cilium. Its subcellular location is the flagellum. Its function is as follows. Microtubule inner protein (MIP) part of the dynein-decorated doublet microtubules (DMTs) in cilia axoneme, which is required for motile cilia beating. It is an AMP-binding protein that may facilitate dynein ATPase-dependent ciliary and flagellar beating via adenine nucleotide homeostasis. May function as a donor of AMP to AK8 and hence promote ADP production. This chain is Cilia- and flagella-associated protein 45, found in Homo sapiens (Human).